A 503-amino-acid polypeptide reads, in one-letter code: GMP synthase [glutamine-hydrolyzing] (503 aa).

The region spanning 1-189 is the Glutamine amidotransferase type-1 domain; it reads MVLVLDFGSQ…FLELAGVKRD (189 aa). C78 (nucleophile) is an active-site residue. Active-site residues include H164 and E166. The 189-residue stretch at 190 to 378 folds into the GMPS ATP-PPase domain; that stretch reads WTPEHVLEEL…LGLPDTLRLR (189 aa). ATP is bound at residue 217–223; that stretch reads SGGVDSS.

In terms of assembly, homodimer.

It catalyses the reaction XMP + L-glutamine + ATP + H2O = GMP + L-glutamate + AMP + diphosphate + 2 H(+). The protein operates within purine metabolism; GMP biosynthesis; GMP from XMP (L-Gln route): step 1/1. Its function is as follows. Catalyzes the synthesis of GMP from XMP. The polypeptide is GMP synthase [glutamine-hydrolyzing] (Thermus thermophilus (strain ATCC 27634 / DSM 579 / HB8)).